The chain runs to 101 residues: uncharacterized protein (101 aa).

Residues Val77–Ile99 form a helical membrane-spanning segment.

The protein localises to the membrane. This is an uncharacterized protein from Acanthamoeba polyphaga mimivirus (APMV).